Reading from the N-terminus, the 471-residue chain is Fructokinase-like 1, chloroplastic (471 aa).

Residues 1–38 (MASLLIFPHLHHFDSSLDRREVLVVRHSQASRRFLTPK) constitute a chloroplast transit peptide. The disordered stretch occupies residues 36 to 85 (TPKASINGSGITNGAAAETTSKPSRKGRKKKQTSTVIEKDNTETDPELNP). The segment covering 39–57 (ASINGSGITNGAAAETTSK) has biased composition (polar residues). Basic residues predominate over residues 58 to 67 (PSRKGRKKKQ).

The protein belongs to the carbohydrate kinase PfkB family. Interacts with CITRX/TRXz. Interacts with PTAC7. Self-interacts. Binds to FLN2. Associates with the plastid-encoded RNA polymerase (PEP) complex.

The protein localises to the plastid. The protein resides in the chloroplast. In terms of biological role, required for proper chloroplast development, most likely through regulating plastid-encoded polymerase (PEP) dependent chloroplast transcription. Acts as a component of the transcriptionally active plastid chromosome that is required for plastid gene expression. The chain is Fructokinase-like 1, chloroplastic from Arabidopsis thaliana (Mouse-ear cress).